The primary structure comprises 316 residues: 4-hydroxy-3-methylbut-2-enyl diphosphate reductase (316 aa).

Cys-12 lines the [4Fe-4S] cluster pocket. His-41 and His-74 together coordinate (2E)-4-hydroxy-3-methylbut-2-enyl diphosphate. 2 residues coordinate dimethylallyl diphosphate: His-41 and His-74. Isopentenyl diphosphate-binding residues include His-41 and His-74. Cys-96 contacts [4Fe-4S] cluster. Residue His-124 participates in (2E)-4-hydroxy-3-methylbut-2-enyl diphosphate binding. His-124 lines the dimethylallyl diphosphate pocket. His-124 contacts isopentenyl diphosphate. Glu-126 acts as the Proton donor in catalysis. Thr-167 contacts (2E)-4-hydroxy-3-methylbut-2-enyl diphosphate. Cys-197 serves as a coordination point for [4Fe-4S] cluster. 4 residues coordinate (2E)-4-hydroxy-3-methylbut-2-enyl diphosphate: Ser-225, Ser-226, Asn-227, and Ser-269. Residues Ser-225, Ser-226, Asn-227, and Ser-269 each contribute to the dimethylallyl diphosphate site. Isopentenyl diphosphate contacts are provided by Ser-225, Ser-226, Asn-227, and Ser-269.

The protein belongs to the IspH family. As to quaternary structure, homodimer. Requires [4Fe-4S] cluster as cofactor.

The enzyme catalyses isopentenyl diphosphate + 2 oxidized [2Fe-2S]-[ferredoxin] + H2O = (2E)-4-hydroxy-3-methylbut-2-enyl diphosphate + 2 reduced [2Fe-2S]-[ferredoxin] + 2 H(+). The catalysed reaction is dimethylallyl diphosphate + 2 oxidized [2Fe-2S]-[ferredoxin] + H2O = (2E)-4-hydroxy-3-methylbut-2-enyl diphosphate + 2 reduced [2Fe-2S]-[ferredoxin] + 2 H(+). It participates in isoprenoid biosynthesis; dimethylallyl diphosphate biosynthesis; dimethylallyl diphosphate from (2E)-4-hydroxy-3-methylbutenyl diphosphate: step 1/1. The protein operates within isoprenoid biosynthesis; isopentenyl diphosphate biosynthesis via DXP pathway; isopentenyl diphosphate from 1-deoxy-D-xylulose 5-phosphate: step 6/6. In terms of biological role, catalyzes the conversion of 1-hydroxy-2-methyl-2-(E)-butenyl 4-diphosphate (HMBPP) into a mixture of isopentenyl diphosphate (IPP) and dimethylallyl diphosphate (DMAPP). Acts in the terminal step of the DOXP/MEP pathway for isoprenoid precursor biosynthesis. The sequence is that of 4-hydroxy-3-methylbut-2-enyl diphosphate reductase from Salmonella paratyphi A (strain ATCC 9150 / SARB42).